A 282-amino-acid polypeptide reads, in one-letter code: Bis(5'-nucleosyl)-tetraphosphatase, symmetrical (282 aa).

Belongs to the Ap4A hydrolase family.

It catalyses the reaction P(1),P(4)-bis(5'-adenosyl) tetraphosphate + H2O = 2 ADP + 2 H(+). In terms of biological role, hydrolyzes diadenosine 5',5'''-P1,P4-tetraphosphate to yield ADP. The sequence is that of Bis(5'-nucleosyl)-tetraphosphatase, symmetrical from Citrobacter koseri (strain ATCC BAA-895 / CDC 4225-83 / SGSC4696).